The chain runs to 216 residues: uncharacterized protein (216 aa).

Belongs to the channel forming colicin family.

This is an uncharacterized protein from Escherichia coli.